The sequence spans 254 residues: Alcohol dehydrogenase (254 aa).

NAD(+) is bound at residue 10–33 (FVAGLGGIGLDTSREIVKSGPKNL). Ser138 is a substrate binding site. The active-site Proton acceptor is Tyr151.

The protein belongs to the short-chain dehydrogenases/reductases (SDR) family. In terms of assembly, homodimer.

The catalysed reaction is a primary alcohol + NAD(+) = an aldehyde + NADH + H(+). It carries out the reaction a secondary alcohol + NAD(+) = a ketone + NADH + H(+). The sequence is that of Alcohol dehydrogenase (Adh) from Drosophila adiastola (Fruit fly).